The following is a 94-amino-acid chain: Co-chaperonin GroES (94 aa).

It belongs to the GroES chaperonin family. As to quaternary structure, heptamer of 7 subunits arranged in a ring. Interacts with the chaperonin GroEL.

The protein resides in the cytoplasm. Its function is as follows. Together with the chaperonin GroEL, plays an essential role in assisting protein folding. The GroEL-GroES system forms a nano-cage that allows encapsulation of the non-native substrate proteins and provides a physical environment optimized to promote and accelerate protein folding. GroES binds to the apical surface of the GroEL ring, thereby capping the opening of the GroEL channel. This Lactiplantibacillus plantarum (strain ATCC BAA-793 / NCIMB 8826 / WCFS1) (Lactobacillus plantarum) protein is Co-chaperonin GroES.